A 404-amino-acid chain; its full sequence is MAATSDRTVYRATTTAPVNIAVIKYWGKRDASLNLPTNSSLSVTLSQRSLRTLTTASCSAIYPAADELILNGKPQDIQTSKRTLACLSNLRSLRQALENADPSLPKLSTLPLRIVSENNFPTAAGLASSAAGFAALVRAVADLYQLPQSPLELSRIARQGSGSACRSLMGGYVAWRAGEREDGSDSLAEEVAPASHWPEMRAIILVVSAEKKDVPSTEGMQTTVATSSLFATRAASVVPERMAAIETAIQNKDFATFAEITMRDSNSFHATCLDSWPPIFYMNDVSRAAVRLVHDINRAVGRTVCAYTFDAGPNAVIYYLEKDSEVVAGTIKAILGPNTEGFDGPFYDILKNVTASVVPLEKVDSRAVEILKNGISRVILTGVGEGPISVEDHLVSATGDILAS.

Residues 25-28 (YWGK), arginine 82, 161-166 (SGSACR), and threonine 217 contribute to the (R)-5-diphosphomevalonate site.

The protein belongs to the diphosphomevalonate decarboxylase family. As to quaternary structure, homodimer.

It catalyses the reaction (R)-5-diphosphomevalonate + ATP = isopentenyl diphosphate + ADP + phosphate + CO2. It functions in the pathway isoprenoid biosynthesis; isopentenyl diphosphate biosynthesis via mevalonate pathway; isopentenyl diphosphate from (R)-mevalonate: step 3/3. Functionally, diphosphomevalonate decarboxylase; part of the second module of ergosterol biosynthesis pathway that includes the middle steps of the pathway. Mvd1 converts diphosphomevalonate into isopentenyl diphosphate. The second module is carried out in the vacuole and involves the formation of farnesyl diphosphate, which is also an important intermediate in the biosynthesis of ubiquinone, dolichol, heme and prenylated proteins. Activity by the mevalonate kinase erg12 (AFUA_4G07780) first converts mevalonate into 5-phosphomevalonate. 5-phosphomevalonate is then further converted to 5-diphosphomevalonate by the phosphomevalonate kinase erg8 (AFUA_5G10680). The diphosphomevalonate decarboxylase mvd1 (AFUA_4G07130) then produces isopentenyl diphosphate. The isopentenyl-diphosphate delta-isomerase idi1 (AFUA_6G11160) then catalyzes the 1,3-allylic rearrangement of the homoallylic substrate isopentenyl (IPP) to its highly electrophilic allylic isomer, dimethylallyl diphosphate (DMAPP). Finally the farnesyl diphosphate synthase erg20 (AFUA_5G02450) catalyzes the sequential condensation of isopentenyl pyrophosphate with dimethylallyl pyrophosphate, and then with the resultant geranylpyrophosphate to the ultimate product farnesyl pyrophosphate. This is Diphosphomevalonate decarboxylase mvd1 from Aspergillus fumigatus (strain ATCC MYA-4609 / CBS 101355 / FGSC A1100 / Af293) (Neosartorya fumigata).